The sequence spans 315 residues: C1GALT1-specific chaperone 1-like protein (315 aa).

The Cytoplasmic portion of the chain corresponds to 1–8 (MVSASGTS). Residues 9-29 (FFKGMLLGSISWVLITMFGQI) form a helical; Signal-anchor for type II membrane protein membrane-spanning segment. Topologically, residues 30–315 (HIRHRGQTQD…FLPPVGSEND (286 aa)) are lumenal. N-linked (GlcNAc...) asparagine glycosylation is found at Asn-55 and Asn-301.

It belongs to the glycosyltransferase 31 family. Beta3-Gal-T subfamily.

The protein localises to the membrane. The chain is C1GALT1-specific chaperone 1-like protein from Homo sapiens (Human).